A 223-amino-acid chain; its full sequence is Thiamine-phosphate synthase (223 aa).

4-amino-2-methyl-5-(diphosphooxymethyl)pyrimidine is bound by residues 42–46 (QLRDK) and Asn-83. Positions 84 and 103 each coordinate Mg(2+). 4-amino-2-methyl-5-(diphosphooxymethyl)pyrimidine is bound at residue Ser-122. 148 to 150 (TPT) is a 2-[(2R,5Z)-2-carboxy-4-methylthiazol-5(2H)-ylidene]ethyl phosphate binding site. Lys-151 provides a ligand contact to 4-amino-2-methyl-5-(diphosphooxymethyl)pyrimidine. A 2-[(2R,5Z)-2-carboxy-4-methylthiazol-5(2H)-ylidene]ethyl phosphate-binding site is contributed by Gly-179.

The protein belongs to the thiamine-phosphate synthase family. Requires Mg(2+) as cofactor.

It carries out the reaction 2-[(2R,5Z)-2-carboxy-4-methylthiazol-5(2H)-ylidene]ethyl phosphate + 4-amino-2-methyl-5-(diphosphooxymethyl)pyrimidine + 2 H(+) = thiamine phosphate + CO2 + diphosphate. It catalyses the reaction 2-(2-carboxy-4-methylthiazol-5-yl)ethyl phosphate + 4-amino-2-methyl-5-(diphosphooxymethyl)pyrimidine + 2 H(+) = thiamine phosphate + CO2 + diphosphate. The enzyme catalyses 4-methyl-5-(2-phosphooxyethyl)-thiazole + 4-amino-2-methyl-5-(diphosphooxymethyl)pyrimidine + H(+) = thiamine phosphate + diphosphate. The protein operates within cofactor biosynthesis; thiamine diphosphate biosynthesis; thiamine phosphate from 4-amino-2-methyl-5-diphosphomethylpyrimidine and 4-methyl-5-(2-phosphoethyl)-thiazole: step 1/1. Its function is as follows. Condenses 4-methyl-5-(beta-hydroxyethyl)thiazole monophosphate (THZ-P) and 2-methyl-4-amino-5-hydroxymethyl pyrimidine pyrophosphate (HMP-PP) to form thiamine monophosphate (TMP). In Mycolicibacterium paratuberculosis (strain ATCC BAA-968 / K-10) (Mycobacterium paratuberculosis), this protein is Thiamine-phosphate synthase.